Consider the following 163-residue polypeptide: Peptide methionine sulfoxide reductase MsrA (163 aa).

Cys10 is a catalytic residue.

It belongs to the MsrA Met sulfoxide reductase family.

It catalyses the reaction L-methionyl-[protein] + [thioredoxin]-disulfide + H2O = L-methionyl-(S)-S-oxide-[protein] + [thioredoxin]-dithiol. It carries out the reaction [thioredoxin]-disulfide + L-methionine + H2O = L-methionine (S)-S-oxide + [thioredoxin]-dithiol. Functionally, has an important function as a repair enzyme for proteins that have been inactivated by oxidation. Catalyzes the reversible oxidation-reduction of methionine sulfoxide in proteins to methionine. The chain is Peptide methionine sulfoxide reductase MsrA from Vesicomyosocius okutanii subsp. Calyptogena okutanii (strain HA).